A 61-amino-acid chain; its full sequence is Potassium channel toxin alpha-KTx 18.1 (61 aa).

The signal sequence occupies residues M1 to V24. Disulfide bonds link C33–C52, C38–C57, and C42–C59.

In terms of tissue distribution, expressed by the venom gland.

Its subcellular location is the secreted. Its function is as follows. Reversible blocker of both Kv1.3/KCNA3 potassium channels (high affinity) and Shaker B (mammalian Kv1.1 analog) potassium channels (very low affinity). The polypeptide is Potassium channel toxin alpha-KTx 18.1 (Tityus obscurus (Amazonian scorpion)).